The primary structure comprises 114 residues: Putative pterin-4-alpha-carbinolamine dehydratase (114 aa).

Belongs to the pterin-4-alpha-carbinolamine dehydratase family.

The catalysed reaction is (4aS,6R)-4a-hydroxy-L-erythro-5,6,7,8-tetrahydrobiopterin = (6R)-L-erythro-6,7-dihydrobiopterin + H2O. This Chlorobium luteolum (strain DSM 273 / BCRC 81028 / 2530) (Pelodictyon luteolum) protein is Putative pterin-4-alpha-carbinolamine dehydratase.